Consider the following 139-residue polypeptide: D-ribose pyranase (139 aa).

H20 (proton donor) is an active-site residue. Substrate-binding positions include D28, H106, and 128 to 130 (YAN).

The protein belongs to the RbsD / FucU family. RbsD subfamily. As to quaternary structure, homodecamer.

The protein resides in the cytoplasm. The catalysed reaction is beta-D-ribopyranose = beta-D-ribofuranose. Its pathway is carbohydrate metabolism; D-ribose degradation; D-ribose 5-phosphate from beta-D-ribopyranose: step 1/2. In terms of biological role, catalyzes the interconversion of beta-pyran and beta-furan forms of D-ribose. This chain is D-ribose pyranase, found in Haemophilus influenzae (strain PittGG).